The following is a 358-amino-acid chain: Probable D-xylulose reductase A (358 aa).

Residues C47, H72, and E73 each contribute to the Zn(2+) site. 182–187 (GAGPVG) contributes to the NAD(+) binding site.

The protein belongs to the zinc-containing alcohol dehydrogenase family. It depends on Zn(2+) as a cofactor.

It catalyses the reaction xylitol + NAD(+) = D-xylulose + NADH + H(+). It participates in carbohydrate degradation; L-arabinose degradation via L-arabinitol; D-xylulose 5-phosphate from L-arabinose (fungal route): step 4/5. Functionally, xylitol dehydrogenase which catalyzes the conversion of xylitol to D-xylulose. Xylose is a major component of hemicelluloses such as xylan. Most fungi utilize D-xylose via three enzymatic reactions, xylose reductase (XR), xylitol dehydrogenase (XDH), and xylulokinase, to form xylulose 5-phosphate, which enters pentose phosphate pathway. The sequence is that of Probable D-xylulose reductase A (xdhA) from Aspergillus clavatus (strain ATCC 1007 / CBS 513.65 / DSM 816 / NCTC 3887 / NRRL 1 / QM 1276 / 107).